The chain runs to 269 residues: C-type lectin domain family 2 member G (269 aa).

Over 1–107 (MNITRASLPM…SPESSAKLYC (107 aa)) the chain is Cytoplasmic. A helical; Signal-anchor for type II membrane protein transmembrane segment spans residues 108–128 (CCGVIMVLTVAVVALSVALPA). The Extracellular segment spans residues 129-269 (TKTEQILINK…SLHCPTPVPV (141 aa)). The C-type lectin domain maps to 150–254 (VGNKCFYFSE…HYIPRIWICS (105 aa)). The N-linked (GlcNAc...) asparagine glycan is linked to N163. Cysteines 171 and 253 form a disulfide.

In terms of tissue distribution, detected in vagina, eye, tongue, stomach and spleen.

The protein resides in the cell membrane. Functionally, inhibits osteoclast formation. The protein is C-type lectin domain family 2 member G (Clec2g) of Mus musculus (Mouse).